A 1854-amino-acid chain; its full sequence is PKS-NRPS hybrid synthetase ATPKS (1854 aa).

The interval 24-423 (FDQTQTRYSP…GRADTQIKIR (400 aa)) is adenylation (A) domain. Residues 523–598 (IPASTLTQQL…NLAAYLSDQT (76 aa)) form the Carrier 1 domain. Serine 558 carries the O-(pantetheine 4'-phosphoryl)serine modification. The Ketosynthase family 3 (KS3) domain maps to 617–1049 (GEDIAVISMA…GTNAHAIIEE (433 aa)). Catalysis depends on for beta-ketoacyl synthase activity residues cysteine 791, histidine 926, and histidine 967. The interval 1162-1496 (LFSGQGTERA…SLSDLHIRKV (335 aa)) is malonyl-CoA:ACP transacylase (MAT) domain. The interval 1536–1556 (KSSGQPSGQSPSGCPQPTGQI) is disordered. Residues 1537 to 1555 (SSGQPSGQSPSGCPQPTGQ) are compositionally biased toward low complexity. Residues 1776-1851 (MMLQGLVRGI…SLSDALQKQV (76 aa)) form the Carrier 2 domain. Serine 1811 is modified (O-(pantetheine 4'-phosphoryl)serine).

In the C-terminal section; belongs to the NRP synthetase family.

The protein operates within secondary metabolite biosynthesis. Functionally, PKS-NRPS hybrid synthetase; part of the gene cluster that mediates the biosynthesis of pyrophen and campyrone B, which represent a class of fungal amino acid-derived alpha-pyrone natural products. The first step of pyrophen biosynthesis is catalyzed by the PKS-NRPS hybrid synthetase ATPKS that uptakes and condensates L-phenylalanine and malonyl-CoA in order to produce desmethyldesacetylpyrophen. Although the A domain does not discriminate between 2 enantiomeric phenylalanines, the downstream KS domain must play a gate keeping role to stereoselectively accept the L-phenylalanyl-S-phosphopantetheine (Ppant)-T domain intermediate for chain elongation. The resulting amino acid derived diketide is off-loaded through lactonization to yield the alpha-pyrone intermediate desmethyldesacetylpyrophen. The cluster-specific O-methyltransferase (OMT) then methylates desmethyldesacetylpyrophen to desacetylpyrophen, which is further acetylated to pyrophen by an endogenous yet unidentified N-acetyltransferase. ATPKS has relaxed substrate specificity to activate and extend branched-chain amino acid L-leucine to produce small amounts of campyrone B. The sequence is that of PKS-NRPS hybrid synthetase ATPKS from Aspergillus niger (strain ATCC 1015 / CBS 113.46 / FGSC A1144 / LSHB Ac4 / NCTC 3858a / NRRL 328 / USDA 3528.7).